The primary structure comprises 90 residues: FMRFamide-like neuropeptides 27 (90 aa).

The N-terminal stretch at 1-24 (MFSFRKFLAFMLIVIALMASFSSA) is a signal peptide. A propeptide spanning residues 25–36 (QPIDEERPIFME) is cleaved from the precursor. Phenylalanine 61 carries the phenylalanine amide modification. Positions 65-90 (SSSPSDISMAELRAIYGGGPVEYVQL) are excised as a propeptide.

The protein belongs to the FARP (FMRFamide related peptide) family.

It is found in the secreted. Its function is as follows. FMRFamides and FMRFamide-like peptides are neuropeptides. The polypeptide is FMRFamide-like neuropeptides 27 (Caenorhabditis briggsae).